A 97-amino-acid polypeptide reads, in one-letter code: Mapk-regulated corepressor-interacting protein 1 (97 aa).

The tract at residues 1–29 (MTSSPVSRVVYNGKRNSSPRSPTNSSEIF) is disordered. Over residues 15–26 (RNSSPRSPTNSS) the composition is skewed to low complexity. Serine 21 bears the Phosphoserine mark. A Phosphothreonine modification is found at threonine 30. Position 41 is a phosphotyrosine (tyrosine 41). Lysine 79 carries the N6-acetyllysine modification. The PXDLS motif motif lies at 80–84 (PIDLS).

This sequence belongs to the MCRIP family. Interacts (unphosphorylated form, via the PXDLS motif) with CTBP1, competitively inhibiting CTBP-ZEB1 interaction. Interacts with CTBP2. Interacts with MCRIP2. Interacts with DDX6. Post-translationally, phosphorylation by MAPK3/1 (ERK1/2) regulates MCRIP1 binding to CTBP(s). Widely expressed (at protein level).

It localises to the nucleus. The protein localises to the cytoplasm. The protein resides in the stress granule. The phosphorylation status of MCRIP1 functions as a molecular switch to regulate epithelial-mesenchymal transition. Unphosphorylated MCRIP1 binds to and inhibits the transcriptional corepressor CTBP(s). When phosphorylated by MAPK/ERK, MCRIP1 releases CTBP(s) resulting in transcriptional silencing of the E-cadherin gene and induction of epithelial-mesenchymal transition. This Mus musculus (Mouse) protein is Mapk-regulated corepressor-interacting protein 1 (Mcrip1).